The following is a 237-amino-acid chain: Leucyl/phenylalanyl-tRNA--protein transferase (237 aa).

Belongs to the L/F-transferase family.

The protein localises to the cytoplasm. The catalysed reaction is N-terminal L-lysyl-[protein] + L-leucyl-tRNA(Leu) = N-terminal L-leucyl-L-lysyl-[protein] + tRNA(Leu) + H(+). It catalyses the reaction N-terminal L-arginyl-[protein] + L-leucyl-tRNA(Leu) = N-terminal L-leucyl-L-arginyl-[protein] + tRNA(Leu) + H(+). The enzyme catalyses L-phenylalanyl-tRNA(Phe) + an N-terminal L-alpha-aminoacyl-[protein] = an N-terminal L-phenylalanyl-L-alpha-aminoacyl-[protein] + tRNA(Phe). Its function is as follows. Functions in the N-end rule pathway of protein degradation where it conjugates Leu, Phe and, less efficiently, Met from aminoacyl-tRNAs to the N-termini of proteins containing an N-terminal arginine or lysine. The chain is Leucyl/phenylalanyl-tRNA--protein transferase (aat) from Vibrio vulnificus (strain CMCP6).